Here is a 226-residue protein sequence, read N- to C-terminus: MKNIQKILPLYFVAGTQDCRHLGENLSENLLFVLKQALEGGITCFQFRDKGKFSLEHTPSAQKALAINCRDLCREYGVPFIVDDNVDLALEIEADGIHVGQSDMPVQEIRAKTDKPLIIGWSVNRLDEAKIGENLAEIDYFGIGPIFPTQSKENPKPTLGMAFIQTLRNAGITKPLVAIGGVKLAHVKTLREFGADGVAVITAITHADNVQAATKALREASDEYAK.

Residues glutamine 46–lysine 50 and aspartate 83 each bind 4-amino-2-methyl-5-(diphosphooxymethyl)pyrimidine. Mg(2+) is bound by residues aspartate 84 and aspartate 103. Serine 122 contacts 4-amino-2-methyl-5-(diphosphooxymethyl)pyrimidine. Threonine 149–serine 151 contributes to the 2-[(2R,5Z)-2-carboxy-4-methylthiazol-5(2H)-ylidene]ethyl phosphate binding site. Lysine 152 lines the 4-amino-2-methyl-5-(diphosphooxymethyl)pyrimidine pocket. Residues glycine 181 and isoleucine 201–threonine 202 contribute to the 2-[(2R,5Z)-2-carboxy-4-methylthiazol-5(2H)-ylidene]ethyl phosphate site.

It belongs to the thiamine-phosphate synthase family. Mg(2+) serves as cofactor.

The catalysed reaction is 2-[(2R,5Z)-2-carboxy-4-methylthiazol-5(2H)-ylidene]ethyl phosphate + 4-amino-2-methyl-5-(diphosphooxymethyl)pyrimidine + 2 H(+) = thiamine phosphate + CO2 + diphosphate. The enzyme catalyses 2-(2-carboxy-4-methylthiazol-5-yl)ethyl phosphate + 4-amino-2-methyl-5-(diphosphooxymethyl)pyrimidine + 2 H(+) = thiamine phosphate + CO2 + diphosphate. It carries out the reaction 4-methyl-5-(2-phosphooxyethyl)-thiazole + 4-amino-2-methyl-5-(diphosphooxymethyl)pyrimidine + H(+) = thiamine phosphate + diphosphate. The protein operates within cofactor biosynthesis; thiamine diphosphate biosynthesis; thiamine phosphate from 4-amino-2-methyl-5-diphosphomethylpyrimidine and 4-methyl-5-(2-phosphoethyl)-thiazole: step 1/1. Functionally, condenses 4-methyl-5-(beta-hydroxyethyl)thiazole monophosphate (THZ-P) and 2-methyl-4-amino-5-hydroxymethyl pyrimidine pyrophosphate (HMP-PP) to form thiamine monophosphate (TMP). This chain is Thiamine-phosphate synthase, found in Haemophilus influenzae (strain ATCC 51907 / DSM 11121 / KW20 / Rd).